The following is a 141-amino-acid chain: Elongation factor G, chloroplastic (141 aa).

The 130-residue stretch at 12–141 folds into the tr-type G domain; it reads KDYRNIGIMA…VPRICFVNKM (130 aa). GTP-binding positions include 21 to 28 and 85 to 89; these read AHIDAGKT and DTPGH.

Belongs to the TRAFAC class translation factor GTPase superfamily. Classic translation factor GTPase family. EF-G/EF-2 subfamily.

Its subcellular location is the plastid. It localises to the chloroplast. Its pathway is protein biosynthesis; polypeptide chain elongation. Chloroplast-localized elongation factor EF-G involved in protein synthesis in plastids. Catalyzes the GTP-dependent ribosomal translocation step during translation elongation. During this step, the ribosome changes from the pre-translocational (PRE) to the post-translocational (POST) state as the newly formed A-site-bound peptidyl-tRNA and P-site-bound deacylated tRNA move to the P and E sites, respectively. Catalyzes the coordinated movement of the two tRNA molecules, the mRNA and conformational changes in the ribosome. The chain is Elongation factor G, chloroplastic (fusA) from Pisum sativum (Garden pea).